The sequence spans 316 residues: DNA-directed RNA polymerase subunit alpha (316 aa).

Positions 1–233 are alpha N-terminal domain (alpha-NTD); that stretch reads MCMSQFPIEF…HWFNPLQTLE (233 aa). The alpha C-terminal domain (alpha-CTD) stretch occupies residues 245–316; it reads MAQLSNMLIE…LHCQLKKYVD (72 aa).

It belongs to the RNA polymerase alpha chain family. As to quaternary structure, in plastids the minimal PEP RNA polymerase catalytic core is composed of four subunits: alpha, beta, beta', and beta''. When a (nuclear-encoded) sigma factor is associated with the core the holoenzyme is formed, which can initiate transcription.

It localises to the plastid. The protein resides in the chloroplast. It catalyses the reaction RNA(n) + a ribonucleoside 5'-triphosphate = RNA(n+1) + diphosphate. In terms of biological role, DNA-dependent RNA polymerase catalyzes the transcription of DNA into RNA using the four ribonucleoside triphosphates as substrates. This Cyanidioschyzon merolae (strain NIES-3377 / 10D) (Unicellular red alga) protein is DNA-directed RNA polymerase subunit alpha.